The following is a 54-amino-acid chain: Large ribosomal subunit protein bL32c (54 aa).

A compositionally biased stretch (basic residues) spans 1–25; the sequence is MAVPKKRTSKAKKNSRKANWKRKAA. The disordered stretch occupies residues 1 to 26; the sequence is MAVPKKRTSKAKKNSRKANWKRKAAK.

It belongs to the bacterial ribosomal protein bL32 family.

It is found in the plastid. It localises to the chloroplast. The protein is Large ribosomal subunit protein bL32c of Thalassiosira pseudonana (Marine diatom).